The following is a 236-amino-acid chain: Ribose-5-phosphate isomerase A (236 aa).

Substrate is bound by residues 33 to 36 (TGST), 90 to 93 (DGAD), and 103 to 106 (KGGG). Glu112 serves as the catalytic Proton acceptor. Lys130 provides a ligand contact to substrate.

It belongs to the ribose 5-phosphate isomerase family. Homodimer.

The enzyme catalyses aldehydo-D-ribose 5-phosphate = D-ribulose 5-phosphate. It functions in the pathway carbohydrate degradation; pentose phosphate pathway; D-ribose 5-phosphate from D-ribulose 5-phosphate (non-oxidative stage): step 1/1. Its function is as follows. Catalyzes the reversible conversion of ribose-5-phosphate to ribulose 5-phosphate. The sequence is that of Ribose-5-phosphate isomerase A from Nostoc sp. (strain PCC 7120 / SAG 25.82 / UTEX 2576).